The primary structure comprises 1740 residues: Vitamin B12-dependent ribonucleoside-diphosphate reductase (1740 aa).

The region spanning 4 to 96 (EKVMKRDGRI…LYRKKKAEIR (93 aa)) is the ATP-cone domain. Substrate is bound by residues T257, 272–273 (AC), and G301. A disulfide bridge connects residues C273 and C1308. The region spanning 443–582 (LAGFIAGDGC…VTHYLNALGI (140 aa)) is the DOD-type homing endonuclease 1 domain. Catalysis depends on N913, which acts as the Proton acceptor. 913–914 (NP) provides a ligand contact to substrate. One can recognise a DOD-type homing endonuclease 2 domain in the interval 1063-1194 (VLGWFIGDGY…VQDLLLLFGI (132 aa)). C1297 serves as the catalytic Cysteine radical intermediate. Substrate is bound by residues 1297 to 1299 (CGE) and 1471 to 1475 (PTGSV). E1299 acts as the Proton acceptor in catalysis.

The protein belongs to the ribonucleoside diphosphate reductase class-2 family. Adenosylcob(III)alamin serves as cofactor. This protein undergoes a protein self splicing that involves a post-translational excision of the intervening region (intein) followed by peptide ligation.

The enzyme catalyses a 2'-deoxyribonucleoside 5'-diphosphate + [thioredoxin]-disulfide + H2O = a ribonucleoside 5'-diphosphate + [thioredoxin]-dithiol. Provides the precursors necessary for DNA synthesis. Catalyzes the biosynthesis of deoxyribonucleotides from the corresponding ribonucleotides. The chain is Vitamin B12-dependent ribonucleoside-diphosphate reductase (rnr) from Pyrococcus furiosus (strain ATCC 43587 / DSM 3638 / JCM 8422 / Vc1).